The sequence spans 121 residues: Neuromedin-B (121 aa).

The signal sequence occupies residues 1 to 24 (MTLRAVGVRLLGGLLLFALLAAGA). M56 is modified (methionine amide). Positions 60–121 (SLEPPSPSLL…RRLLVQTLQK (62 aa)) are excised as a propeptide. Residues 61 to 80 (LEPPSPSLLGTAPHTSLRDQ) form a disordered region.

This sequence belongs to the bombesin/neuromedin-B/ranatensin family.

It localises to the secreted. The protein resides in the cell projection. The protein localises to the neuron projection. Functionally, stimulates smooth muscle contraction. Induces sighing by acting directly on the pre-Botzinger complex, a cluster of several thousand neurons in the ventrolateral medulla responsible for inspiration during respiratory activity. Contributes to the induction of sneezing following exposure to chemical irritants or allergens which causes release of NMB by nasal sensory neurons and activation of NMBR-expressing neurons in the sneeze-evoking region of the brainstem. These in turn activate neurons of the caudal ventral respiratory group, giving rise to the sneezing response. Contributes to induction of acute itch, possibly through activation of the NMBR receptor on dorsal root ganglion neurons. Increases expression of NMBR and steroidogenic mediators STAR, CYP11A1 and HSD3B1 in Leydig cells, induces secretion of testosterone by Leydig cells and also promotes Leydig cell proliferation. Plays a role in the innate immune response to influenza A virus infection by enhancing interferon alpha expression and reducing expression of IL6. Plays a role in CSF1-induced proliferation of osteoclast precursors by contributing to the positive regulation of the expression of the CSF1 receptor CSF1R. This chain is Neuromedin-B (NMB), found in Bos taurus (Bovine).